A 316-amino-acid polypeptide reads, in one-letter code: Homoserine kinase (316 aa).

Position 97-107 (97-107 (PHSRGLGSSAA)) interacts with ATP.

It belongs to the GHMP kinase family. Homoserine kinase subfamily.

It is found in the cytoplasm. The catalysed reaction is L-homoserine + ATP = O-phospho-L-homoserine + ADP + H(+). It participates in amino-acid biosynthesis; L-threonine biosynthesis; L-threonine from L-aspartate: step 4/5. Functionally, catalyzes the ATP-dependent phosphorylation of L-homoserine to L-homoserine phosphate. This is Homoserine kinase from Mycobacterium tuberculosis (strain ATCC 25618 / H37Rv).